A 185-amino-acid polypeptide reads, in one-letter code: NADH-ubiquinone oxidoreductase chain 6 (185 aa).

Helical transmembrane passes span 3-23 (SLFM…ISTP), 28-48 (SVFW…SLGL), 54-74 (IFII…IMLI), 87-107 (HFLP…TNSP), and 134-154 (ELVL…ILLA).

Belongs to the complex I subunit 6 family.

The protein localises to the mitochondrion membrane. The catalysed reaction is a ubiquinone + NADH + 5 H(+)(in) = a ubiquinol + NAD(+) + 4 H(+)(out). Its function is as follows. Core subunit of the mitochondrial membrane respiratory chain NADH dehydrogenase (Complex I) that is believed to belong to the minimal assembly required for catalysis. Complex I functions in the transfer of electrons from NADH to the respiratory chain. The immediate electron acceptor for the enzyme is believed to be ubiquinone. The chain is NADH-ubiquinone oxidoreductase chain 6 (ND6) from Sarcophyton glaucum (Toadstool umbrella leather coral).